Reading from the N-terminus, the 175-residue chain is Ferritin light chain (175 aa).

Ser-2 is subject to N-acetylserine. A Ferritin-like diiron domain is found at 7-156 (QNYSTEVEAA…DHLTNLRRLS (150 aa)). 5 residues coordinate Fe cation: Glu-54, Glu-57, Glu-58, Glu-61, and Glu-64.

This sequence belongs to the ferritin family. Oligomer of 24 subunits. There are two types of subunits: L (light) chain and H (heavy) chain. The major chain can be light or heavy, depending on the species and tissue type. The functional molecule forms a roughly spherical shell with a diameter of 12 nm and contains a central cavity into which the insoluble mineral iron core is deposited. Interacts with NCOA4.

The protein resides in the cytoplasmic vesicle. It localises to the autophagosome. Its subcellular location is the cytoplasm. The protein localises to the autolysosome. In terms of biological role, stores iron in a soluble, non-toxic, readily available form. Important for iron homeostasis. Iron is taken up in the ferrous form and deposited as ferric hydroxides after oxidation. Also plays a role in delivery of iron to cells. Mediates iron uptake in capsule cells of the developing kidney. Delivery to lysosomes by the cargo receptor NCOA4 for autophagic degradation and release or iron. The sequence is that of Ferritin light chain (FTL) from Felis catus (Cat).